The chain runs to 339 residues: Alpha-N-dichloroacetyl-p-aminophenylserinol N-oxygenase (339 aa).

Basic and acidic residues predominate over residues 1–19 (MRDHTDEKSEAAGNDDGHV). Residues 1–22 (MRDHTDEKSEAAGNDDGHVRIG) are disordered. Residues E109, E144, H147, E205, H232, E236, and H239 each coordinate Fe cation.

Belongs to the AurF N-oxygenase family. Fe(2+) serves as cofactor.

It carries out the reaction alpha-N-dichloroacetyl-p-aminophenylserinol + AH2 + 2 O2 = chloramphenicol + A + 2 H2O. It functions in the pathway antibiotic biosynthesis. Involved in chloramphenicol biosynthesis. Catalyzes the six-electron oxidation of an aryl-amine precursor of chloramphenicol (NH2-CAM) to yield the aryl-nitro group of chloramphenicol (CAM). During catalysis, upon exposure of the diferrous cluster to O(2), ClmI forms an exceptionally long-lived peroxo intermediate (CmlI-peroxo), which reacts with NH2-CAM to form CAM. This is Alpha-N-dichloroacetyl-p-aminophenylserinol N-oxygenase from Streptomyces venezuelae (strain ATCC 10712 / CBS 650.69 / DSM 40230 / JCM 4526 / NBRC 13096 / PD 04745).